The chain runs to 424 residues: ATP-dependent RNA helicase WM6 (424 aa).

Residues 1-16 are compositionally biased toward acidic residues; it reads MADNDDLLDYEDEEQT. The segment at 1–27 is disordered; sequence MADNDDLLDYEDEEQTETTAVENQEAP. Positions 41–69 match the Q motif motif; it reads SGFRDFLLKPEILRAIVDCGFEHPSEVQH. The Helicase ATP-binding domain occupies 72–246; sequence IPQAVLGMDI…KKFMQDPMEV (175 aa). 85–92 serves as a coordination point for ATP; that stretch reads AKSGMGKT. A DECD box motif is present at residues 193-196; the sequence is DECD. In terms of domain architecture, Helicase C-terminal spans 258 to 419; the sequence is GLQQHYVNLK…ELPEEIDLST (162 aa).

The protein belongs to the DEAD box helicase family. DECD subfamily. Component of the spliceosome. Interacts with the exon junction complex.

The protein localises to the nucleus speckle. It carries out the reaction ATP + H2O = ADP + phosphate + H(+). In terms of biological role, required for mRNA export out of the nucleus. Probable RNA helicase that may regulate entry into mitosis by down-regulating the expression of other genes whose activity may be rate-limiting for entry into mitosis during embryogenesis. Binds to salivary gland chromosomes and modifies position effect variegation. Promotes an open chromatin structure that favors transcription during development by regulating the spread of heterochromatin. This chain is ATP-dependent RNA helicase WM6 (Hel25E), found in Drosophila melanogaster (Fruit fly).